The primary structure comprises 474 residues: ATP synthase subunit beta 2 (474 aa).

Residue 153 to 160 (GGAGVGKT) participates in ATP binding.

The protein belongs to the ATPase alpha/beta chains family. In terms of assembly, F-type ATPases have 2 components, CF(1) - the catalytic core - and CF(0) - the membrane proton channel. CF(1) has five subunits: alpha(3), beta(3), gamma(1), delta(1), epsilon(1). CF(0) has three main subunits: a(1), b(2) and c(9-12). The alpha and beta chains form an alternating ring which encloses part of the gamma chain. CF(1) is attached to CF(0) by a central stalk formed by the gamma and epsilon chains, while a peripheral stalk is formed by the delta and b chains.

The protein localises to the cell inner membrane. It carries out the reaction ATP + H2O + 4 H(+)(in) = ADP + phosphate + 5 H(+)(out). Produces ATP from ADP in the presence of a proton gradient across the membrane. The catalytic sites are hosted primarily by the beta subunits. The chain is ATP synthase subunit beta 2 from Syntrophotalea carbinolica (strain DSM 2380 / NBRC 103641 / GraBd1) (Pelobacter carbinolicus).